A 292-amino-acid chain; its full sequence is D-galactarolactone isomerase (292 aa).

The protein belongs to the metallo-dependent hydrolases superfamily. Requires Does not require a metal cofactor. as cofactor.

It catalyses the reaction D-galactaro-1,5-lactone = D-galactaro-1,4-lactone. Its pathway is carbohydrate acid metabolism; D-galacturonate degradation via prokaryotic oxidative pathway. Its function is as follows. Catalyzes the isomerization of D-galactaro-1,5-lactone to D-galactaro-1,4-lactone. This is a step in the oxidative degradation pathway of D-galacturonate, which allows A.tumefaciens to utilize D-galacturonate as a sole carbon source. The sequence is that of D-galactarolactone isomerase from Agrobacterium fabrum (strain C58 / ATCC 33970) (Agrobacterium tumefaciens (strain C58)).